The chain runs to 489 residues: Calcium uptake protein 1, mitochondrial (489 aa).

Residues 1 to 34 (MYRLRALTAATVGMVQLTRRHHTGAFRSYQRRRL) constitute a mitochondrion transit peptide. Residues 62 to 109 (SSVKHEEQMREEEPLKDVAEEAESDGALESSSGEDEDEAGSEEKKKKQ) are disordered. Positions 64-80 (VKHEEQMREEEPLKDVA) are enriched in basic and acidic residues. A compositionally biased stretch (acidic residues) spans 81–101 (EEAESDGALESSSGEDEDEAG). The polybasic region stretch occupies residues 106-117 (KKKQRIGFRDRK). Residues 133 to 136 (KIFR) are k/R-ring. In terms of domain architecture, EF-hand 1 spans 229–264 (TPQRNFEIAFKMFDLNGDGEVDLEEFEQVQSIIRSQ). Asp242, Asn244, Asp246, Glu248, and Glu253 together coordinate Ca(2+). Residues 270 to 274 (RHRDR) are k/R-ring. EF-hand domains are found at residues 371-386 (ITFE…LKNV) and 420-455 (LSDH…RLMR). Asp433, Asp435, Asn437, Glu439, and Glu444 together coordinate Ca(2+). The C-helix region stretch occupies residues 467-477 (RLVRAMWKCAQ).

It belongs to the MICU1 family. MICU1 subfamily. In terms of assembly, heterodimer; disulfide-linked; heterodimerizes with micu2. Component of the uniplex complex.

The protein resides in the mitochondrion intermembrane space. It localises to the mitochondrion inner membrane. Its function is as follows. Calcium sensor of the mitochondrial calcium uniporter (mcu) channel, which senses calcium level via its EF-hand domains. micu1 and micu2 form a disulfide-linked heterodimer that stimulates and inhibits MCU activity, depending on the concentration of calcium. At low calcium levels, micu1 occludes the pore of the MCU channel, preventing mitochondrial calcium uptake. At higher calcium levels, calcium-binding to micu1 and micu2 induces a conformational change that weakens mcu-micu1 interactions and moves the micu1-micu2 heterodimer away from the pore, allowing calcium permeation through the mcu channel. Also required to protect against manganese toxicity by preventing manganese uptake by mcu. The polypeptide is Calcium uptake protein 1, mitochondrial (micu1) (Danio rerio (Zebrafish)).